The sequence spans 445 residues: Phosphoglucosamine mutase (445 aa).

Ser100 (phosphoserine intermediate) is an active-site residue. Mg(2+) contacts are provided by Ser100, Asp240, Asp242, and Asp244. Phosphoserine is present on Ser100.

The protein belongs to the phosphohexose mutase family. The cofactor is Mg(2+). Activated by phosphorylation.

It carries out the reaction alpha-D-glucosamine 1-phosphate = D-glucosamine 6-phosphate. Functionally, catalyzes the conversion of glucosamine-6-phosphate to glucosamine-1-phosphate. This is Phosphoglucosamine mutase from Pelotomaculum thermopropionicum (strain DSM 13744 / JCM 10971 / SI).